Here is a 331-residue protein sequence, read N- to C-terminus: 6-phosphogluconolactonase (331 aa).

Lysine 287 carries the post-translational modification N6-acetyllysine.

Belongs to the cycloisomerase 2 family.

It catalyses the reaction 6-phospho-D-glucono-1,5-lactone + H2O = 6-phospho-D-gluconate + H(+). It participates in carbohydrate degradation; pentose phosphate pathway; D-ribulose 5-phosphate from D-glucose 6-phosphate (oxidative stage): step 2/3. Functionally, catalyzes the hydrolysis of 6-phosphogluconolactone to 6-phosphogluconate. The chain is 6-phosphogluconolactonase from Escherichia coli O127:H6 (strain E2348/69 / EPEC).